The primary structure comprises 192 residues: Natural cytotoxicity triggering receptor 3 (192 aa).

Residues 1 to 18 (MAKVLLIVFIMVYAGSCA) form the signal peptide. The 108-residue stretch at 19 to 126 (IWVSQPPEIR…VGTGNGTRLV (108 aa)) folds into the Ig-like domain. Over 19–147 (IWVSQPPEIR…AEPERAAYTS (129 aa)) the chain is Extracellular. Cysteine 39 and cysteine 108 are joined by a disulfide. Residues asparagine 42 and asparagine 121 are each glycosylated (N-linked (GlcNAc...) asparagine). The helical transmembrane segment at 148-168 (LLLRAGVYALSFLSVATGSVI) threads the bilayer. Residues 169-192 (YYQGKCLCHVGNTATPPTASEERF) lie on the Cytoplasmic side of the membrane.

The protein belongs to the natural cytotoxicity receptor (NCR) family. Homodimer in the unliganted form. Interacts with CD3Z. Interacts with and is activated by binding to NCR3LG1. Interacts with and is activated by binding to BAG6. Interacts with and is inhibited by binding to LGALS3.

It localises to the cell membrane. Its function is as follows. Cell membrane receptor of natural killer/NK cells that is activated by binding of extracellular ligands including BAG6 and NCR3LG1. Stimulates NK cells cytotoxicity toward neighboring cells producing these ligands. It controls, for instance, NK cells cytotoxicity against tumor cells. Engagement of NCR3 by BAG6 also promotes myeloid dendritic cells (DC) maturation, both through killing DCs that did not acquire a mature phenotype, and inducing the release by NK cells of TNFA and IFNG that promote DC maturation. The chain is Natural cytotoxicity triggering receptor 3 (Ncr3) from Rattus norvegicus (Rat).